A 95-amino-acid polypeptide reads, in one-letter code: Exodeoxyribonuclease 7 small subunit (95 aa).

This sequence belongs to the XseB family. Heterooligomer composed of large and small subunits.

The protein resides in the cytoplasm. The enzyme catalyses Exonucleolytic cleavage in either 5'- to 3'- or 3'- to 5'-direction to yield nucleoside 5'-phosphates.. Its function is as follows. Bidirectionally degrades single-stranded DNA into large acid-insoluble oligonucleotides, which are then degraded further into small acid-soluble oligonucleotides. The chain is Exodeoxyribonuclease 7 small subunit from Corynebacterium aurimucosum (strain ATCC 700975 / DSM 44827 / CIP 107346 / CN-1) (Corynebacterium nigricans).